A 151-amino-acid chain; its full sequence is Protein A151R (151 aa).

Belongs to the asfivirus A151R family. In terms of assembly, monomer. Homodimer. Interacts with protein B119L. Interacts with membrane protein E248R. Zn(2+) serves as cofactor.

In terms of biological role, may participate in a redox cascade for the formation of disulfide bonds in viral proteins. This is Protein A151R from Ornithodoros (relapsing fever ticks).